We begin with the raw amino-acid sequence, 400 residues long: CinA-like protein (400 aa).

This sequence belongs to the CinA family.

In Sulfurihydrogenibium sp. (strain YO3AOP1), this protein is CinA-like protein.